We begin with the raw amino-acid sequence, 64 residues long: Large ribosomal subunit protein bL28 (64 aa).

Belongs to the bacterial ribosomal protein bL28 family.

In Desulfotalea psychrophila (strain LSv54 / DSM 12343), this protein is Large ribosomal subunit protein bL28.